The following is a 421-amino-acid chain: Threonine--tRNA ligase editing subunit (421 aa).

Belongs to the class-II aminoacyl-tRNA synthetase family. Archaea-specific ThrRS editing domain subfamily. Probably interacts with its catalytic subunit.

Its subcellular location is the cytoplasm. Its function is as follows. Freestanding tRNA editing subunit of threonine--tRNA ligase, the catalytic subunit is probably AC Q9YDW0. Deacylates (edits) mischarged L-seryl-tRNA(Thr) in trans; has no activity on correctly charged L-threonyl-tRNA(Thr). Probably does not aminoacylate tRNA(Thr). Deacylates correctly charged glycyl-tRNA(Gly), but not glycyl-tRNA(Gly)(2'-dA76) (the terminal 2'-OH of tRNA adenine 76 has been dehydroxylated) nor the 2'-fluoro tRNA derivative, strongly suggesting the editing function is catalyzed by the 2'-OH of A76 of tRNA(Thr). The sequence is that of Threonine--tRNA ligase editing subunit (thrS2) from Aeropyrum pernix (strain ATCC 700893 / DSM 11879 / JCM 9820 / NBRC 100138 / K1).